We begin with the raw amino-acid sequence, 199 residues long: Ribonuclease HII (199 aa).

The 190-residue stretch at 10–199 folds into the RNase H type-2 domain; it reads HLVAGVDEVG…VKRALGLASN (190 aa). 3 residues coordinate a divalent metal cation: aspartate 16, glutamate 17, and aspartate 108.

It belongs to the RNase HII family. It depends on Mn(2+) as a cofactor. Mg(2+) serves as cofactor.

The protein localises to the cytoplasm. It catalyses the reaction Endonucleolytic cleavage to 5'-phosphomonoester.. Its function is as follows. Endonuclease that specifically degrades the RNA of RNA-DNA hybrids. The polypeptide is Ribonuclease HII (Klebsiella pneumoniae subsp. pneumoniae (strain ATCC 700721 / MGH 78578)).